The sequence spans 472 residues: Exodeoxyribonuclease 7 large subunit (472 aa).

Belongs to the XseA family. In terms of assembly, heterooligomer composed of large and small subunits.

The protein localises to the cytoplasm. The catalysed reaction is Exonucleolytic cleavage in either 5'- to 3'- or 3'- to 5'-direction to yield nucleoside 5'-phosphates.. Bidirectionally degrades single-stranded DNA into large acid-insoluble oligonucleotides, which are then degraded further into small acid-soluble oligonucleotides. The sequence is that of Exodeoxyribonuclease 7 large subunit from Carboxydothermus hydrogenoformans (strain ATCC BAA-161 / DSM 6008 / Z-2901).